Reading from the N-terminus, the 397-residue chain is DnaJ homolog subfamily A member 4 (397 aa).

The J domain occupies 4-70; the sequence is ETQYYDILGV…RDIYDQGGEQ (67 aa). At S18 the chain carries Phosphoserine. Residues 122-206 form a CR-type zinc finger; the sequence is GITKKLALQK…CSGAKVTREK (85 aa). C135, C138, C151, C154, C178, C181, C194, and C197 together coordinate Zn(2+). 4 CXXCXGXG motif repeats span residues 135–142, 151–158, 178–185, and 194–201; these read CEKCEGIG, CPLCKGRG, CIECKGQG, and CENCSGAK. Basic and acidic residues predominate over residues 366-380; sequence EFNPNEQSWRQHREA. The disordered stretch occupies residues 366 to 397; the sequence is EFNPNEQSWRQHREAYEEDDEEPRAGVQCQTA. Position 394 is a cysteine methyl ester (C394). A lipid anchor (S-farnesyl cysteine) is attached at C394. Residues 395 to 397 constitute a propeptide, removed in mature form; sequence QTA.

As to expression, specifically expressed in testis and heart.

It is found in the membrane. In Mus musculus (Mouse), this protein is DnaJ homolog subfamily A member 4 (Dnaja4).